The chain runs to 161 residues: Cytochrome c-type biogenesis protein CcmE (161 aa).

Residues 1–8 lie on the Cytoplasmic side of the membrane; it reads MNPRRKKR. Residues 9 to 29 form a helical; Signal-anchor for type II membrane protein membrane-spanning segment; sequence LTLAVALVFGLGATIGLMLYA. Residues 30 to 161 lie on the Periplasmic side of the membrane; the sequence is LSQNMDLFYT…SDEQKQGRVQ (132 aa). Positions 129 and 133 each coordinate heme.

This sequence belongs to the CcmE/CycJ family.

It localises to the cell inner membrane. Functionally, heme chaperone required for the biogenesis of c-type cytochromes. Transiently binds heme delivered by CcmC and transfers the heme to apo-cytochromes in a process facilitated by CcmF and CcmH. The polypeptide is Cytochrome c-type biogenesis protein CcmE (Photobacterium profundum (strain SS9)).